Reading from the N-terminus, the 457-residue chain is Multidrug resistance protein MdtK (457 aa).

12 consecutive transmembrane segments (helical) span residues 11–31 (LLAL…MGFV), 53–73 (IWLP…PVIA), 93–113 (WLAG…GYII), 127–147 (AVGY…FQVA), 160–180 (GMVM…IFIY), 189–209 (GGVG…LAMV), 243–263 (LPIA…ALLV), 276–296 (IALN…AAVT), 314–334 (AART…IFTV), 350–370 (VVTL…SDSI), 387–407 (IFYI…YILA), and 418–438 (PAGF…MMML).

It belongs to the multi antimicrobial extrusion (MATE) (TC 2.A.66.1) family. MdtK subfamily.

The protein localises to the cell inner membrane. Its function is as follows. Multidrug efflux pump that functions probably as a Na(+)/drug antiporter. The chain is Multidrug resistance protein MdtK from Escherichia coli O127:H6 (strain E2348/69 / EPEC).